A 156-amino-acid polypeptide reads, in one-letter code: uncharacterized protein (156 aa).

In terms of domain architecture, N-acetyltransferase spans 11–156; sequence EEFRSYLTYT…ETDVVMSKKL (146 aa).

This sequence belongs to the acetyltransferase family. As to quaternary structure, homodimer.

This is an uncharacterized protein from Bacillus subtilis (strain 168).